The chain runs to 802 residues: Copal-8-ol diphosphate hydratase, chloroplastic (802 aa).

The transit peptide at 1–24 (MQVIITSSHRFFCHHLHQLKSPTS) directs the protein to the chloroplast. Lysine 249 is a binding site for substrate. Residues aspartate 382 and aspartate 384 each contribute to the Mg(2+) site. The DXDD motif motif lies at 382–385 (DVDD). Substrate is bound at residue lysine 468.

It belongs to the terpene synthase family. Mg(2+) serves as cofactor. As to expression, expressed specifically in the secretory cells of the glandular trichomes.

It localises to the plastid. The protein localises to the chloroplast. The enzyme catalyses (2E,6E,10E)-geranylgeranyl diphosphate + H2O = 8-hydroxycopalyl diphosphate. The protein operates within secondary metabolite biosynthesis; terpenoid biosynthesis. Class-II terpene synthase that synthesizes 8-hydroxy-copalyl diphosphate. Involved in the biosynthesis of cis-abienol, a labdane diterpene that can be used as synthesis precursor of ambergris substitution fragance products. This chain is Copal-8-ol diphosphate hydratase, chloroplastic, found in Nicotiana tabacum (Common tobacco).